We begin with the raw amino-acid sequence, 580 residues long: Proline--tRNA ligase (580 aa).

Belongs to the class-II aminoacyl-tRNA synthetase family. ProS type 1 subfamily. In terms of assembly, homodimer.

It localises to the cytoplasm. It catalyses the reaction tRNA(Pro) + L-proline + ATP = L-prolyl-tRNA(Pro) + AMP + diphosphate. Functionally, catalyzes the attachment of proline to tRNA(Pro) in a two-step reaction: proline is first activated by ATP to form Pro-AMP and then transferred to the acceptor end of tRNA(Pro). As ProRS can inadvertently accommodate and process non-cognate amino acids such as alanine and cysteine, to avoid such errors it has two additional distinct editing activities against alanine. One activity is designated as 'pretransfer' editing and involves the tRNA(Pro)-independent hydrolysis of activated Ala-AMP. The other activity is designated 'posttransfer' editing and involves deacylation of mischarged Ala-tRNA(Pro). The misacylated Cys-tRNA(Pro) is not edited by ProRS. The sequence is that of Proline--tRNA ligase from Polynucleobacter necessarius subsp. necessarius (strain STIR1).